Here is a 58-residue protein sequence, read N- to C-terminus: Ribulose bisphosphate carboxylase large chain (58 aa).

Residues 1–2 constitute a propeptide that is removed on maturation; that stretch reads MS. N-acetylproline is present on proline 3. Lysine 14 is subject to N6,N6,N6-trimethyllysine.

It belongs to the RuBisCO large chain family. Type I subfamily. In terms of assembly, heterohexadecamer of 8 large chains and 8 small chains.

The protein localises to the plastid. Its subcellular location is the chloroplast. The catalysed reaction is 2 (2R)-3-phosphoglycerate + 2 H(+) = D-ribulose 1,5-bisphosphate + CO2 + H2O. It carries out the reaction D-ribulose 1,5-bisphosphate + O2 = 2-phosphoglycolate + (2R)-3-phosphoglycerate + 2 H(+). Its function is as follows. RuBisCO catalyzes two reactions: the carboxylation of D-ribulose 1,5-bisphosphate, the primary event in carbon dioxide fixation, as well as the oxidative fragmentation of the pentose substrate in the photorespiration process. Both reactions occur simultaneously and in competition at the same active site. This chain is Ribulose bisphosphate carboxylase large chain (rbcL), found in Euonymus maackii (Maack's spindle tree).